We begin with the raw amino-acid sequence, 311 residues long: Serine/threonine-protein phosphatase PP1-1 (311 aa).

Mn(2+) is bound by residues D53, H55, D82, and N114. Catalysis depends on H115, which acts as the Proton donor. The Mn(2+) site is built by H164 and H238.

Belongs to the PPP phosphatase family. PP-6 (PP-V) subfamily. As to quaternary structure, inactivated in a complex with phosphatase methylesterase PPE1 (PP2Ai). Interacts with phosphatase 2A activator RRD1, which can reactivate PP2Ai by dissociating the catalytic subunit from the complex. Forms a ternary complex with RRD1-TAP42. The cofactor is Mn(2+).

Its subcellular location is the cytoplasm. The catalysed reaction is O-phospho-L-seryl-[protein] + H2O = L-seryl-[protein] + phosphate. It carries out the reaction O-phospho-L-threonyl-[protein] + H2O = L-threonyl-[protein] + phosphate. In terms of biological role, involved in the dephosphorylation of the large subunit of RNA polymerase II. Is required in late G1 for normal G1 cyclin expression, bud initiation and expression of certain genes that are periodically expressed during late G1. Associates with the SAP proteins in a cell cycle-dependent manner. This is Serine/threonine-protein phosphatase PP1-1 (SIT4) from Saccharomyces cerevisiae (strain ATCC 204508 / S288c) (Baker's yeast).